The sequence spans 470 residues: Ribosomal protein uS12 methylthiotransferase RimO (470 aa).

The region spanning 20–131 (PTVAFAHLGC…IVEVLQQVEA (112 aa)) is the MTTase N-terminal domain. 6 residues coordinate [4Fe-4S] cluster: Cys-29, Cys-65, Cys-94, Cys-169, Cys-173, and Cys-176. A Radical SAM core domain is found at 155-384 (TTGEAVAYLK…MTLQQPISAA (230 aa)). In terms of domain architecture, TRAM spans 387–458 (ASWIGKTVDV…IYDLSGHVVS (72 aa)).

Belongs to the methylthiotransferase family. RimO subfamily. The cofactor is [4Fe-4S] cluster.

It is found in the cytoplasm. The catalysed reaction is L-aspartate(89)-[ribosomal protein uS12]-hydrogen + (sulfur carrier)-SH + AH2 + 2 S-adenosyl-L-methionine = 3-methylsulfanyl-L-aspartate(89)-[ribosomal protein uS12]-hydrogen + (sulfur carrier)-H + 5'-deoxyadenosine + L-methionine + A + S-adenosyl-L-homocysteine + 2 H(+). Catalyzes the methylthiolation of an aspartic acid residue of ribosomal protein uS12. This is Ribosomal protein uS12 methylthiotransferase RimO from Synechococcus sp. (strain CC9311).